Here is a 230-residue protein sequence, read N- to C-terminus: UPF0173 metal-dependent hydrolase MM_2300 (230 aa).

It belongs to the UPF0173 family.

The chain is UPF0173 metal-dependent hydrolase MM_2300 from Methanosarcina mazei (strain ATCC BAA-159 / DSM 3647 / Goe1 / Go1 / JCM 11833 / OCM 88) (Methanosarcina frisia).